The chain runs to 355 residues: Uroporphyrinogen decarboxylase (355 aa).

Substrate-binding positions include 27-31 (RQAGR), Asp78, Tyr155, Ser210, and His328.

It belongs to the uroporphyrinogen decarboxylase family. In terms of assembly, homodimer.

It localises to the cytoplasm. It catalyses the reaction uroporphyrinogen III + 4 H(+) = coproporphyrinogen III + 4 CO2. It participates in porphyrin-containing compound metabolism; protoporphyrin-IX biosynthesis; coproporphyrinogen-III from 5-aminolevulinate: step 4/4. Catalyzes the decarboxylation of four acetate groups of uroporphyrinogen-III to yield coproporphyrinogen-III. The protein is Uroporphyrinogen decarboxylase of Pseudomonas paraeruginosa (strain DSM 24068 / PA7) (Pseudomonas aeruginosa (strain PA7)).